The sequence spans 112 residues: CLAVATA3/ESR (CLE)-related protein 44 (112 aa).

An N-terminal signal peptide occupies residues 1–39 (MATTIDQTSIKSLHFHQVIRLIITIIFLAFLFLIGPTSS). The segment at 41 to 112 (NHHLHESSSK…VPSGPNPISN (72 aa)) is disordered. Residues 62–71 (QPSTPSSSTM) show a composition bias toward polar residues. A hydroxyproline mark is found at Pro104 and Pro107. O-linked (Ara...) hydroxyproline glycosylation occurs at Pro107.

It belongs to the CLV3/ESR signal peptide family. As to quaternary structure, interacts specifically with the leucine-rich repeat receptor-like protein kinase TDR, especially in the presence of SERK2. The O-glycosylation (arabinosylation) of the hydroxyproline Pro-107 enhances binding affinity of the CLE44p peptide for its receptor. In terms of tissue distribution, mostly expressed in flowers and leaves. Widely expressed along the vascular strands. In roots and hypocotyls, present in endodermal cells as well as cells in the phloem and the adjacent pericycle.

The protein resides in the secreted. It is found in the extracellular space. In terms of biological role, extracellular signal peptide that regulates cell fate. May act with TDR as a ligand-receptor pair in a signal transduction pathway that represses tracheary element differentiation but promotes the formation of procambial cells adjacent to phloem cells in the veins. Regulates the transition of protophloem cells from proliferation to differentiation, thus impinging on postembryonic growth capacity of the root meristem; this signaling pathway requires CRN and CLV2. The chain is CLAVATA3/ESR (CLE)-related protein 44 from Arabidopsis thaliana (Mouse-ear cress).